The chain runs to 461 residues: Phosphomethylpyrimidine synthase (461 aa).

Substrate contacts are provided by residues asparagine 80, methionine 109, tyrosine 139, histidine 174, 194–196 (SRG), 235–238 (DSLR), and glutamate 274. Residue histidine 278 participates in Zn(2+) binding. Tyrosine 301 contacts substrate. A Zn(2+)-binding site is contributed by histidine 342. Positions 422, 425, and 430 each coordinate [4Fe-4S] cluster.

The protein belongs to the ThiC family. Homodimer. Requires [4Fe-4S] cluster as cofactor.

The enzyme catalyses 5-amino-1-(5-phospho-beta-D-ribosyl)imidazole + S-adenosyl-L-methionine = 4-amino-2-methyl-5-(phosphooxymethyl)pyrimidine + CO + 5'-deoxyadenosine + formate + L-methionine + 3 H(+). It functions in the pathway cofactor biosynthesis; thiamine diphosphate biosynthesis. In terms of biological role, catalyzes the synthesis of the hydroxymethylpyrimidine phosphate (HMP-P) moiety of thiamine from aminoimidazole ribotide (AIR) in a radical S-adenosyl-L-methionine (SAM)-dependent reaction. This is Phosphomethylpyrimidine synthase from Nautilia profundicola (strain ATCC BAA-1463 / DSM 18972 / AmH).